Reading from the N-terminus, the 346-residue chain is Tyrosine--tRNA ligase (346 aa).

The 'HIGH' region signature appears at 47 to 56 (PSGRIHIAQA). Residues 230-234 (KMSKS) carry the 'KMSKS' region motif. Lysine 233 contacts ATP.

This sequence belongs to the class-I aminoacyl-tRNA synthetase family. In terms of assembly, homodimer.

The enzyme catalyses tRNA(Tyr) + L-tyrosine + ATP = L-tyrosyl-tRNA(Tyr) + AMP + diphosphate + H(+). Its function is as follows. Catalyzes the attachment of tyrosine to tRNA(Tyr) in a two-step reaction: tyrosine is first activated by ATP to form Tyr-AMP and then transferred to the acceptor end of tRNA(Tyr). The chain is Tyrosine--tRNA ligase (YARS) from Acanthamoeba polyphaga (Amoeba).